Consider the following 757-residue polypeptide: MFKIIKKSIEWGGRTLSLETGKIARQAHGSVVVNYGDTSVLVTVVSKKKEENVDFLPLNVQFIAKSYAMGKIPGGFFKREGKPSDRETLISRVIDRSIRPLFPEGFHDEISVVCNLLTYDTVNPPEVPALIGAVAALAISGVPFHFTIAGVMVGCDENNNYILNPSVQEMKASSLDLFLSGDENSILMVESEVKELSEENVFNAIKFGHEHLKPVIKLIKEFADTIGNKPESFAPIDASDITQELEKYGKDFEKAYSQTVKQERVQALEAIRENILNTLKETGKDEKLITYAVKNFERSLVREIIRKKSVRIDGRKHDEIRQIEVEVDILSKTHGSALFTRGNTQALVVTALGTTQDEQIVDDIEGDRREHFMLHYNFPSFAVGETSAARAPGRREIGHGKLAWKAIHPVLPDKSEFPYTIRVVSEILESDGSSSMATVCGTSLALMDTGVPIKAPVAGIAMGLIKDKDEYVILSDILGDEDYLGDMDFKVAGTSEGVTALQMDMKISGISFEIVEKSLEQAKAGRLHILEKMNAVISEHSDDVKDHAPRMLSFYIDKDKISAAIGSKGKNIRSVCERSNAKIEIGDDGKVSVFATSGTEAEIAKSMMIDSITELEQGSIVDVKVVRIEKSIVELEFLNGRKGKMHISEVANEHIDSIESVLKQDDTFKALVIDFEKGGCPKLSRRRVDQETGEFFEGELYNEERKDGPNDRDNYYNNSFSRKPGGSHHKRPPRPRSGFSNRNRPKFGNNDSSSGFY.

Residues Asp482 and Asp488 each contribute to the Mg(2+) site. A KH domain is found at 549-608 (PRMLSFYIDKDKISAAIGSKGKNIRSVCERSNAKIEIGDDGKVSVFATSGTEAEIAKSMM). The S1 motif domain maps to 618–686 (GSIVDVKVVR…KGGCPKLSRR (69 aa)). The segment covering 703–714 (EERKDGPNDRDN) has biased composition (basic and acidic residues). Residues 703–757 (EERKDGPNDRDNYYNNSFSRKPGGSHHKRPPRPRSGFSNRNRPKFGNNDSSSGFY) are disordered. A compositionally biased stretch (basic residues) spans 725–734 (GGSHHKRPPR).

The protein belongs to the polyribonucleotide nucleotidyltransferase family. It depends on Mg(2+) as a cofactor.

It is found in the cytoplasm. The enzyme catalyses RNA(n+1) + phosphate = RNA(n) + a ribonucleoside 5'-diphosphate. Functionally, involved in mRNA degradation. Catalyzes the phosphorolysis of single-stranded polyribonucleotides processively in the 3'- to 5'-direction. This is Polyribonucleotide nucleotidyltransferase from Wolbachia sp. subsp. Drosophila simulans (strain wRi).